The primary structure comprises 143 residues: Nucleoside diphosphate kinase (143 aa).

Residues 1–132 (MVKPDGVQRG…LWFSPQELCQ (132 aa)) enclose the NDPK-like domain. The ADP site is built by Lys-3, Phe-51, Arg-79, Thr-85, Arg-96, Val-103, and Asn-106. Lys-3, Phe-51, Arg-79, Thr-85, and Arg-96 together coordinate ATP. Asn-106 contacts ATP. His-109 functions as the Pros-phosphohistidine intermediate in the catalytic mechanism.

Belongs to the NDK family. As to quaternary structure, homohexamer. Mg(2+) serves as cofactor.

The catalysed reaction is a 2'-deoxyribonucleoside 5'-diphosphate + ATP = a 2'-deoxyribonucleoside 5'-triphosphate + ADP. It carries out the reaction a ribonucleoside 5'-diphosphate + ATP = a ribonucleoside 5'-triphosphate + ADP. The enzyme catalyses GDP + ATP = GTP + ADP. The protein operates within purine metabolism; purine nucleotide biosynthesis. Functionally, major role in the synthesis of nucleoside triphosphates other than ATP. The ATP gamma phosphate is transferred to the NDP beta phosphate via a ping-pong mechanism, using a phosphorylated active-site intermediate. In Schistosoma mansoni (Blood fluke), this protein is Nucleoside diphosphate kinase.